Here is a 149-residue protein sequence, read N- to C-terminus: Deoxyuridine 5'-triphosphate nucleotidohydrolase (149 aa).

Substrate-binding positions include 68-70 (RSG), Asn-81, 85-87 (LID), and Met-95.

The protein belongs to the dUTPase family. Requires Mg(2+) as cofactor.

The catalysed reaction is dUTP + H2O = dUMP + diphosphate + H(+). Its pathway is pyrimidine metabolism; dUMP biosynthesis; dUMP from dCTP (dUTP route): step 2/2. Functionally, this enzyme is involved in nucleotide metabolism: it produces dUMP, the immediate precursor of thymidine nucleotides and it decreases the intracellular concentration of dUTP so that uracil cannot be incorporated into DNA. This Bordetella pertussis (strain Tohama I / ATCC BAA-589 / NCTC 13251) protein is Deoxyuridine 5'-triphosphate nucleotidohydrolase.